We begin with the raw amino-acid sequence, 80 residues long: Cytochrome c oxidase subunit 7B, mitochondrial (80 aa).

The N-terminal 24 residues, methionine 1–glutamine 24, are a transit peptide targeting the mitochondrion. At serine 25–threonine 32 the chain is on the mitochondrial matrix side. The helical transmembrane segment at phenylalanine 33–glutamine 59 threads the bilayer. Residues isoleucine 60 to glutamine 80 are Mitochondrial intermembrane-facing.

The protein belongs to the cytochrome c oxidase VIIb family. Component of the cytochrome c oxidase (complex IV, CIV), a multisubunit enzyme composed of 14 subunits. The complex is composed of a catalytic core of 3 subunits MT-CO1, MT-CO2 and MT-CO3, encoded in the mitochondrial DNA, and 11 supernumerary subunits COX4I, COX5A, COX5B, COX6A, COX6B, COX6C, COX7A, COX7B, COX7C, COX8 and NDUFA4, which are encoded in the nuclear genome. The complex exists as a monomer or a dimer and forms supercomplexes (SCs) in the inner mitochondrial membrane with NADH-ubiquinone oxidoreductase (complex I, CI) and ubiquinol-cytochrome c oxidoreductase (cytochrome b-c1 complex, complex III, CIII), resulting in different assemblies (supercomplex SCI(1)III(2)IV(1) and megacomplex MCI(2)III(2)IV(2)).

It localises to the mitochondrion inner membrane. The protein operates within energy metabolism; oxidative phosphorylation. Component of the cytochrome c oxidase, the last enzyme in the mitochondrial electron transport chain which drives oxidative phosphorylation. The respiratory chain contains 3 multisubunit complexes succinate dehydrogenase (complex II, CII), ubiquinol-cytochrome c oxidoreductase (cytochrome b-c1 complex, complex III, CIII) and cytochrome c oxidase (complex IV, CIV), that cooperate to transfer electrons derived from NADH and succinate to molecular oxygen, creating an electrochemical gradient over the inner membrane that drives transmembrane transport and the ATP synthase. Cytochrome c oxidase is the component of the respiratory chain that catalyzes the reduction of oxygen to water. Electrons originating from reduced cytochrome c in the intermembrane space (IMS) are transferred via the dinuclear copper A center (CU(A)) of subunit 2 and heme A of subunit 1 to the active site in subunit 1, a binuclear center (BNC) formed by heme A3 and copper B (CU(B)). The BNC reduces molecular oxygen to 2 water molecules using 4 electrons from cytochrome c in the IMS and 4 protons from the mitochondrial matrix. Plays a role in proper central nervous system (CNS) development in vertebrates. The protein is Cytochrome c oxidase subunit 7B, mitochondrial (Cox7b) of Rattus norvegicus (Rat).